The sequence spans 302 residues: MSKQAAVIELGYMGISVKDPDAWKSFAMNMLGLQVLDEGEKDRFYLRMDYWHHRIVVHHSAEDDLEYLGWRVAGKPEFEALGQKLIDAGYKIRVCDKVEAQERMVLGLMKTEDPGGNPTEIFWGPRIDMSNPFHPGRPLHGKFVTGDQGLGHCIVRQTDVAAAHKFYSLLGFRGDVEYRIPLPNGMTAELSFMHCNARDHSIAFGAMPAAKRLNHLMLEYTHMEDLGYTHQQFVKNEIDIALQLGIHANDKALTFYGATPSGWLIEPGWRGATAIDEAEYYVGDIFGHGVEAPGYGLDVKLS.

2 consecutive VOC domains span residues 9-124 (ELGY…IFWG) and 149-270 (GLGH…PGWR). Position 152 (H152) interacts with Fe cation. Residues H152, 199 to 200 (DH), H215, and Y256 each bind substrate. H215 is a binding site for Fe cation. Residue E266 coordinates Fe cation.

The protein belongs to the extradiol ring-cleavage dioxygenase family. Requires Fe(2+) as cofactor.

The catalysed reaction is naphthalene-1,2-diol + O2 = 2-hydroxychromene-2-carboxylate + H(+). Its pathway is aromatic compound metabolism; naphthalene degradation. With respect to regulation, inhibited by bathophenanthroline sulfonate, o-phenanthroline, 8-hydroxyquinoline, 2,2'-dipyridyl and p-chlormercuribenzoate. Also inhibited by Hg(2+), Cu(2+), Co(2+) and Fe(3+) ions. In terms of biological role, involved in the naphthalene catabolic pathway. Catalyzes the meta-cleavage of 1,2-dihydroxynaphthalene (1,2-DHN) to yield 2-hydroxychromene-2-carboxylic acid. Can also cleave 3-methylcatechol and 4-methylcatechol. In Pseudomonas putida (Arthrobacter siderocapsulatus), this protein is 1,2-dihydroxynaphthalene dioxygenase (nahC).